The chain runs to 779 residues: Catalase-peroxidase (779 aa).

The segment at residues 148–270 is a cross-link (tryptophyl-tyrosyl-methioninium (Trp-Tyr) (with M-296)); the sequence is WHSAGTYRIT…LGAVQMGLIY (123 aa). The Proton acceptor role is filled by histidine 149. The tryptophyl-tyrosyl-methioninium (Tyr-Met) (with W-148) cross-link spans 270–296; sequence YVNPEGPNGKPDPIAAAKDIRETFFRM. Residue histidine 311 coordinates heme b.

The protein belongs to the peroxidase family. Peroxidase/catalase subfamily. Homodimer or homotetramer. The cofactor is heme b. Formation of the three residue Trp-Tyr-Met cross-link is important for the catalase, but not the peroxidase activity of the enzyme.

It carries out the reaction H2O2 + AH2 = A + 2 H2O. The enzyme catalyses 2 H2O2 = O2 + 2 H2O. Functionally, bifunctional enzyme with both catalase and broad-spectrum peroxidase activity. The chain is Catalase-peroxidase from Bradyrhizobium diazoefficiens (strain JCM 10833 / BCRC 13528 / IAM 13628 / NBRC 14792 / USDA 110).